The sequence spans 386 residues: Patatin-16 (386 aa).

Residues 1 to 23 form the signal peptide; that stretch reads MATTKSFLILIVMILATTSSTFA. In terms of domain architecture, PNPLA spans 32-229; sequence LSIDGGGIKG…TVADPALLSV (198 aa). The GXGXXG signature appears at 36 to 41; sequence GGGIKG. Residues 75-79 carry the GXSXG motif; it reads GTSTG. Serine 77 functions as the Nucleophile in the catalytic mechanism. Residue asparagine 115 is glycosylated (N-linked (GlcNAc...) asparagine). Aspartate 215 (proton acceptor) is an active-site residue. Positions 215 to 217 match the DGA/G motif; it reads DGA. Residues 360-384 adopt a coiled-coil conformation; sequence ETYEEALKRFAKLLSDRKKLRANKA.

Belongs to the patatin family.

It is found in the vacuole. Functionally, probable lipolytic acyl hydrolase (LAH), an activity which is thought to be involved in the response of tubers to pathogens. This is Patatin-16 from Solanum tuberosum (Potato).